The chain runs to 443 residues: Diels-Alderase poxQ (443 aa).

The first 23 residues, 1–23 (MARIPLEFLSITLPVLLLAYCLA), serve as a signal peptide directing secretion. N78, N97, and N145 each carry an N-linked (GlcNAc...) asparagine glycan.

The protein belongs to the Diels-Alderase family.

It functions in the pathway secondary metabolite biosynthesis. Functionally, diels-Alderase; part of the gene cluster that mediates the biosynthesis of oxaleimides, cytotoxic compounds containing an unusual disubstituted succinimide moiety. The first step of the pathway is provided by the HR-PKS poxF that serves in a new mode of collaborative biosynthesis with the PKS-NRPS poxE, by providing the olefin containing amino acid substrate via the synthesis of an ACP-bound dec-4-enoate. The cytochrome P450 monooxygenase poxM-catalyzed oxidation at the alpha-position creates the enzyme-bound 2-hydroxydec-4-enoyl-ACP thioester, which may be prone to spontaneous hydrolysis to yield 2-hydroxydec-4-enoic acid due to increased electrophilicity of the carbonyl. 2-hydroxydec-4-enoic acid can then be further oxidized by poxM to yield the alpha-ketoacid 2-oxodec-4-enoicacid, which is reductively aminated by the aminotransferase poxL to yield (S,E)-2-aminodec-4-enoic acid. The Hybrid PKS-NRPS synthetase poxE then performs condensation between the octaketide product of its PKS modules and the amino group of (S,E)-2-aminodec-4-enoic acid which is activated and incorporated by the adenylation domain. The resulting aminoacyl product can be cyclized by the Diels-Alderase PoxQ and reductively released by the reductive (R) domain of poxE to yield an aldehyde intermediate. The released aldehyde is then substrate for a Knoevenagel condensation by the hydrolyase poxO followed by an oxidation at the 5-position of the pyrrolidone ring. The presence of the olefin from the amino acid building block allows for migration of the substituted allyl group to occur. This allylic transposition reaction takes place in a conjugate addition, semipinacol-like fashion to yield a succinimide intermediate. Iterative two-electron oxidations of the C7 methyl of the succinimide intermediate to the carboxylic acid can be catalyzed by one of two remaining cytochrome P450 monooxygenasess poxC or poxD to yield oxaleimide A. Subsequent oxidation yields the maleimide scaffold oxaleimide I. Both oxaleimide A and oxaleimide I can undergo oxidative modifications in the decalin ring to yield the series of products oxaleimides B to H. This is Diels-Alderase poxQ from Penicillium oxalicum (strain 114-2 / CGMCC 5302) (Penicillium decumbens).